Consider the following 431-residue polypeptide: Pyroglutamylated RF-amide peptide receptor (431 aa).

Over 1-46 the chain is Extracellular; it reads MQALNITPEQFSRLLRDHNLTREQFIALYRLRPLVYTPELPGRAKL. N19 carries an N-linked (GlcNAc...) asparagine glycan. The chain crosses the membrane as a helical span at residues 47–67; it reads ALVLTGVLIFALALFGNALVF. The Cytoplasmic portion of the chain corresponds to 68–81; sequence YVVTRSKAMRTVTN. A helical membrane pass occupies residues 82–102; that stretch reads IFICSLALSDLLITFFCIPVT. Residues 103–120 are Extracellular-facing; the sequence is MLQNISDNWLGGAFICKM. A helical membrane pass occupies residues 121–141; sequence VPFVQSTAVVTEILTMTCIAV. Over 142 to 162 the chain is Cytoplasmic; the sequence is ERHQGLVHPFKMKWQYTNRRA. Residues 163–183 form a helical membrane-spanning segment; sequence FTMLGVVWLVAVIVGSPMWHV. Topologically, residues 184-212 are extracellular; it reads QQLEIKYDFLYEKEHICCLEEWTSPVHQK. The chain crosses the membrane as a helical span at residues 213-233; the sequence is IYTTFILVILFLLPLMVMLIL. Residues 234–271 are Cytoplasmic-facing; it reads YSKIGYELWIKKRVGDGSVLRTIHGKEMSKIARKKKRA. A helical transmembrane segment spans residues 272-292; sequence VIMMVTVVALFAVCWAPFHVV. Residues 293–311 are Extracellular-facing; the sequence is HMMIEYSNFEKEYDDVTIK. A helical transmembrane segment spans residues 312 to 332; that stretch reads MIFAIVQIIGFSNSICNPIVY. The Cytoplasmic segment spans residues 333 to 431; sequence AFMNENFKKN…AENSPLDSGH (99 aa).

It belongs to the G-protein coupled receptor 1 family. In terms of tissue distribution, expressed widely in the brain with high levels in the hypothalamus, trigeminal ganglia and vestibular neurons, and moderate levels in the amygdala, cortex, pituitary, hippocampus, thalamus, caudate nucleus and medulla oblongata. In peripheral tissues, expressed at high levels in the retina and at moderate levels in the heart, kidney, testis and thyroid.

It is found in the cell membrane. Functionally, receptor for the orexigenic neuropeptide QRFP. The activity of this receptor is mediated by G proteins that modulate adenylate cyclase activity and intracellular calcium levels. This Homo sapiens (Human) protein is Pyroglutamylated RF-amide peptide receptor (QRFPR).